The following is a 208-amino-acid chain: MSLTREQLAQQIVDAGRFLYGRGWSPATSSNYSTRLSPSEALLTVSGKHKGQLGLDDVLATDLSGNSLEPGKKPSAETLLHTQLYSWRPEIGAVLHTHSVNATVLSRLTPQDFIEFEDYELQKAFSGVSTHESRVRVPIFDNDQDIARLAAKVQPWLEAHPDCVGYLIRGHGLYTWGAQMSDALRQIEAFEFLFECELKTRSVMNRQG.

Positions 96 and 98 each coordinate Zn(2+).

Belongs to the aldolase class II family. MtnB subfamily. It depends on Zn(2+) as a cofactor.

It carries out the reaction 5-(methylsulfanyl)-D-ribulose 1-phosphate = 5-methylsulfanyl-2,3-dioxopentyl phosphate + H2O. The protein operates within amino-acid biosynthesis; L-methionine biosynthesis via salvage pathway; L-methionine from S-methyl-5-thio-alpha-D-ribose 1-phosphate: step 2/6. Catalyzes the dehydration of methylthioribulose-1-phosphate (MTRu-1-P) into 2,3-diketo-5-methylthiopentyl-1-phosphate (DK-MTP-1-P). In Pseudomonas fluorescens (strain Pf0-1), this protein is Methylthioribulose-1-phosphate dehydratase.